A 339-amino-acid polypeptide reads, in one-letter code: Inositol 2-dehydrogenase (339 aa).

This sequence belongs to the Gfo/Idh/MocA family. In terms of assembly, homotetramer.

The catalysed reaction is myo-inositol + NAD(+) = scyllo-inosose + NADH + H(+). Its function is as follows. Involved in the oxidation of myo-inositol (MI) to 2-keto-myo-inositol (2KMI or 2-inosose). In Leifsonia xyli subsp. xyli (strain CTCB07), this protein is Inositol 2-dehydrogenase.